A 476-amino-acid polypeptide reads, in one-letter code: Protein transport protein Sec61 subunit alpha isoform 2 (476 aa).

The Cytoplasmic segment spans residues 1-32 (MGIKFLEVIKPFCAVLPEIQKPERKIQFREKV). The helical transmembrane segment at 33-53 (LWTAITLFIFLVCCQIPLFGI) threads the bilayer. At 54–75 (MSSDSADPFYWMRVILASNRGT) the chain is on the lumenal side. Residues 76–96 (LMELGISPIVTSGLIMQLLAG) form a helical membrane-spanning segment. Over 97-117 (AKIIEVGDTPKDRALFNGAQK) the chain is Cytoplasmic. The helical transmembrane segment at 118-138 (LFGMIITIGQAIVYVMTGMYG) threads the bilayer. At 139–144 (DPAEMG) the chain is on the lumenal side. The chain crosses the membrane as a helical span at residues 145 to 165 (AGICLLIIIQLFVAGLIVLLL). The Cytoplasmic segment spans residues 166-172 (DELLQKG). A helical membrane pass occupies residues 173 to 193 (YGLGSGISLFIATNICETIVW). Residues 194–240 (KASSPTTINTGRGTEFEGAVIALFHLLATRTDKVRALREAFYRQNLP) lie on the Lumenal side of the membrane. Residues 241–261 (NLMNLIATVFVFAVVIYFQGF) form a helical membrane-spanning segment. Topologically, residues 262-288 (RVDLPIKSARYRGQYSSYPIKLFYTSN) are cytoplasmic. A helical transmembrane segment spans residues 289–309 (IPIILQSALVSNLYVISQMLS). Residues 310 to 353 (VRFSGNFLVNLLGQWADVSGGGPARSYPVGGLCYYLSPPESMGA) lie on the Lumenal side of the membrane. The chain crosses the membrane as a helical span at residues 354–374 (ILEDPVHVVVYIIFMLGSCAF). Topologically, residues 375 to 420 (FSKTWIEVSGSSAKDVAKQLKEQQMVMRGHRDTSMVHELNRYIPTA) are cytoplasmic. Transmembrane regions (helical) follow at residues 421–441 (AAFGGLCIGALSVLADFLGAI) and 442–462 (GSGTGILLAVTIIYQYFEIFV). Residues 463–476 (KEQAEVGGMGALFF) are Cytoplasmic-facing.

This sequence belongs to the SecY/SEC61-alpha family. As to quaternary structure, the SEC61 channel-forming translocon complex consists of channel-forming core components SEC61A1, SEC61B and SEC61G and different auxiliary components such as SEC62 and SEC63.

It localises to the endoplasmic reticulum membrane. In terms of biological role, component of SEC61 channel-forming translocon complex that mediates transport of signal peptide-containing precursor polypeptides across the endoplasmic reticulum (ER). Forms a ribosome receptor and a gated pore in the ER membrane, both functions required for cotranslational translocation of nascent polypeptides. This chain is Protein transport protein Sec61 subunit alpha isoform 2 (SEC61A2), found in Pongo abelii (Sumatran orangutan).